A 570-amino-acid polypeptide reads, in one-letter code: Frizzled-2 (570 aa).

Positions 1-28 are cleaved as a signal peptide; sequence MRARSALPRSALPRLLLPLLLLPAAGPA. Over 29–252 the chain is Extracellular; that stretch reads QFHGEKGISI…HHHTRFARLW (224 aa). In terms of domain architecture, FZ spans 39-158; sequence PDHGFCQPIS…HGAEQICVGQ (120 aa). Intrachain disulfides connect cysteine 44–cysteine 105, cysteine 52–cysteine 98, cysteine 89–cysteine 126, cysteine 115–cysteine 155, and cysteine 119–cysteine 143. A glycan (N-linked (GlcNAc...) asparagine) is linked at asparagine 58. A glycan (N-linked (GlcNAc...) asparagine) is linked at asparagine 159. The interval 166–194 is disordered; that stretch reads PALLTTAPPSGLQPGAGGTPGGPGGGGAP. Gly residues predominate over residues 179 to 193; sequence PGAGGTPGGPGGGGA. Residues 253-273 form a helical membrane-spanning segment; the sequence is ILTWSVLCCASTFFTVTTSLV. Residues 274 to 284 are Cytoplasmic-facing; it reads AMQRFRYPERP. Residues 285–305 traverse the membrane as a helical segment; the sequence is IIFLSGCYTMVSVAYIAGFVL. The Extracellular segment spans residues 306–332; it reads QERVVCNERFSEDGYRTVGQGTKKEGC. The chain crosses the membrane as a helical span at residues 333–353; it reads TILFMMLYFFSMASSIWWVIL. The Cytoplasmic portion of the chain corresponds to 354–375; it reads SLTWFLAAGMKWGHAAIEANSQ. A helical transmembrane segment spans residues 376-396; sequence YFHLAAWAVPAVKTITILAMG. The Extracellular portion of the chain corresponds to 397–419; it reads QIDGDLLSGVCFVGLNRLDPLRG. A helical membrane pass occupies residues 420 to 440; sequence FVLAPLFVYLFIGTSFLLAGF. Over 441–466 the chain is Cytoplasmic; sequence VSLFRIRTIMKHDGTKTEPLERLMVR. The chain crosses the membrane as a helical span at residues 467–487; it reads IGVFSVLYTVPATIVIACYFY. Topologically, residues 488–524 are extracellular; it reads EQAFREHWERSWVSQHCKSLAIPCPAHYTPRTSPDFT. The helical transmembrane segment at 525 to 545 threads the bilayer; the sequence is VYMIKYLMTLIVGITSGFWIW. Over 546-570 the chain is Cytoplasmic; that stretch reads SGKTLHSWRKFYTRLTNSRHGETTV. The short motif at 548–553 is the Lys-Thr-X-X-X-Trp motif, mediates interaction with the PDZ domain of Dvl family members element; it reads KTLHSW. The PDZ-binding motif lies at 568–570; sequence TTV.

The protein belongs to the G-protein coupled receptor Fz/Smo family. Ubiquitinated by ZNRF3, leading to its degradation by the proteasome. Widely expressed. Most abundant in kidney, liver, uterus, ovary and heart. Lower levels seen in brain and intestine. Extremely low in calvaria, mammary glands and testis.

It localises to the membrane. The protein resides in the cell membrane. Functionally, receptor for Wnt proteins. Most of frizzled receptors are coupled to the beta-catenin canonical signaling pathway, which leads to the activation of disheveled proteins, inhibition of GSK-3 kinase, nuclear accumulation of beta-catenin and activation of Wnt target genes. A second signaling pathway involving PKC and calcium fluxes has been seen for some family members, but it is not yet clear if it represents a distinct pathway or if it can be integrated in the canonical pathway, as PKC seems to be required for Wnt-mediated inactivation of GSK-3 kinase. Both pathways seem to involve interactions with G-proteins. May be involved in transduction and intercellular transmission of polarity information during tissue morphogenesis and/or in differentiated tissues. Activation by Wnt5A stimulates PKC activity via a G-protein-dependent mechanism. The chain is Frizzled-2 (Fzd2) from Rattus norvegicus (Rat).